The following is a 109-amino-acid chain: Nucleoid-associated protein HAPS_1040 (109 aa).

Positions 1 to 21 (MFGKGGLGGLMKQAQQMQERM) are disordered. Residues 10 to 19 (LMKQAQQMQE) show a composition bias toward low complexity.

This sequence belongs to the YbaB/EbfC family. Homodimer.

It localises to the cytoplasm. It is found in the nucleoid. In terms of biological role, binds to DNA and alters its conformation. May be involved in regulation of gene expression, nucleoid organization and DNA protection. The sequence is that of Nucleoid-associated protein HAPS_1040 from Glaesserella parasuis serovar 5 (strain SH0165) (Haemophilus parasuis).